A 126-amino-acid chain; its full sequence is Small ribosomal subunit protein uS13 (126 aa).

The interval 94-126 is disordered; it reads RGLPVHGQRTSTNARTRKGPRRAIAGKKKPGKK. Residues 108–126 are compositionally biased toward basic residues; sequence RTRKGPRRAIAGKKKPGKK.

Belongs to the universal ribosomal protein uS13 family. In terms of assembly, part of the 30S ribosomal subunit. Forms a loose heterodimer with protein S19. Forms two bridges to the 50S subunit in the 70S ribosome.

Its function is as follows. Located at the top of the head of the 30S subunit, it contacts several helices of the 16S rRNA. In the 70S ribosome it contacts the 23S rRNA (bridge B1a) and protein L5 of the 50S subunit (bridge B1b), connecting the 2 subunits; these bridges are implicated in subunit movement. Contacts the tRNAs in the A and P-sites. The chain is Small ribosomal subunit protein uS13 from Streptomyces griseus subsp. griseus (strain JCM 4626 / CBS 651.72 / NBRC 13350 / KCC S-0626 / ISP 5235).